The chain runs to 702 residues: Pentatricopeptide repeat-containing protein At4g16390, chloroplastic (702 aa).

The N-terminal 53 residues, 1 to 53, are a transit peptide targeting the chloroplast; the sequence is MSFHHLCSSPSSLLHDPLPLCNLLSVYPKSTPRSFLSSYNPNSSHFHSRNLLQ. PPR repeat units lie at residues 174–208, 209–243, 244–278, 279–313, 314–348, 349–383, 384–414, 420–454, and 455–489; these read EVIL…GIKP, DNAT…GCEP, DNVT…KWRI, DAVT…GVKP, NLVI…GFTP, NWST…GLSL, TVIL…MKNC, DSWT…GFEP, and TLFV…GITP. Residues 603–688 form the Smr domain; that stretch reads LHLKSLSLGA…WFLTTSVAAK (86 aa).

Belongs to the PPR family. P subfamily. Expressed in leaves and flowers and at lower levels in stems and flower buds.

Its subcellular location is the plastid. It localises to the chloroplast. Functionally, involved in chloroplast RNA processing. Can bind RNA. Involved in chloroplast development. Involved in chloroplast ribosomal RNA (rRNA) processing and/or translation. Required for FtsH-mediated chloroplast biogenesis. Involved in translation and accumulation of chloroplast ATP synthase subunits. The polypeptide is Pentatricopeptide repeat-containing protein At4g16390, chloroplastic (Arabidopsis thaliana (Mouse-ear cress)).